Reading from the N-terminus, the 100-residue chain is MGALTKAEMAERLYEELGLNKREAKELVELFFEEIRHALEDNEQVKLSGFGNFDLRDKRQRPGRNPKTGEEIPITARRVVTFRPGQKLKARVEAYAGTKS.

Residues 54 to 73 (DLRDKRQRPGRNPKTGEEIP) form a disordered region.

Belongs to the bacterial histone-like protein family. In terms of assembly, heterodimer of an alpha and a beta chain.

This protein is one of the two subunits of integration host factor, a specific DNA-binding protein that functions in genetic recombination as well as in transcriptional and translational control. The protein is Integration host factor subunit alpha of Pseudomonas savastanoi pv. phaseolicola (strain 1448A / Race 6) (Pseudomonas syringae pv. phaseolicola (strain 1448A / Race 6)).